A 1418-amino-acid polypeptide reads, in one-letter code: JmjC domain-containing histone demethylation protein 1 (1418 aa).

Disordered regions lie at residues Met-1–Thr-86, Ala-102–Asp-162, and Gly-308–Asn-329. Over residues Trp-44–Val-60 the composition is skewed to basic and acidic residues. Positions Thr-61 to Asn-71 are enriched in polar residues. Positions Ser-127 to Lys-139 are enriched in basic and acidic residues. The segment covering Pro-143–Asp-162 has biased composition (polar residues). Positions Gly-308 to Asp-321 are enriched in basic and acidic residues. The PHD-type zinc finger occupies Gln-331–Ile-391. A JmjC domain is found at Val-588 to Lys-746. Thr-639 is a substrate binding site. The Fe cation site is built by His-642 and Asp-644. Lys-659 provides a ligand contact to substrate. His-714 contributes to the Fe cation binding site. Disordered stretches follow at residues Pro-891–Ile-964, Asn-1090–Cys-1118, Tyr-1130–Arg-1195, and Lys-1250–Asp-1394. The segment covering Leu-907–Glu-925 has biased composition (basic and acidic residues). Basic and acidic residues-rich tracts occupy residues Tyr-1130–Lys-1143 and Ala-1186–Arg-1195. The span at Lys-1250–Ala-1263 shows a compositional bias: polar residues. A compositionally biased stretch (low complexity) spans Ser-1341–Ser-1352.

This sequence belongs to the JHDM1 histone demethylase family. It depends on Fe(2+) as a cofactor.

It localises to the nucleus. The enzyme catalyses N(6),N(6)-dimethyl-L-lysyl(36)-[histone H3] + 2 2-oxoglutarate + 2 O2 = L-lysyl(36)-[histone H3] + 2 formaldehyde + 2 succinate + 2 CO2. Functionally, histone demethylase that specifically demethylates 'Lys-36' of histone H3, thereby playing a central role in histone code. The chain is JmjC domain-containing histone demethylation protein 1 (jhd1) from Aspergillus fumigatus (strain ATCC MYA-4609 / CBS 101355 / FGSC A1100 / Af293) (Neosartorya fumigata).